The following is a 734-amino-acid chain: Rho GTPase-activating protein gacL (734 aa).

The Rho-GAP domain occupies isoleucine 141–phenylalanine 339. 3 WD repeats span residues glycine 381–glutamate 430, leucine 539–glutamine 579, and lysine 585–lysine 623.

It localises to the cytoplasm. Its function is as follows. Rho GTPase-activating protein involved in the signal transduction pathway. This Dictyostelium discoideum (Social amoeba) protein is Rho GTPase-activating protein gacL (gacL).